Consider the following 950-residue polypeptide: Double-stranded RNA-binding protein Staufen homolog (950 aa).

Disordered stretches follow at residues 25-168 (VSGA…QQQQ), 202-274 (QQQL…QPST), and 288-342 (VTPV…NTKE). Low complexity predominate over residues 31–43 (QQRSMMSQQRGGS). A compositionally biased stretch (polar residues) spans 45–66 (AINSSKSPYQLQTSSISQFSHL). The segment covering 67–77 (QQQQQQQQQQQ) has biased composition (low complexity). Over residues 78–122 (LVNNYHKQKQMSPDITSHQFSSSTGGGMPTQNGNYQSMSGSSIHT) the composition is skewed to polar residues. Composition is skewed to low complexity over residues 130-143 (QLSL…YSSQ), 153-168 (QQHH…QQQQ), and 202-253 (QQQL…ILQH). The segment covering 254–274 (SPTSGKSLSSAPHGTSVQPST) has biased composition (polar residues). Residues 313 to 322 (SGRDSVHVSD) are compositionally biased toward basic and acidic residues. 4 consecutive DRBM domains span residues 344-411 (TPMC…ETKC), 435-546 (TPTV…ILKN), 578-645 (SEIS…ELRK), and 690-758 (NPIS…LLGY). Disordered regions lie at residues 758–833 (YTKP…HTAS) and 922–950 (DIHP…DFSK). Residues 765-782 (PTKSSFKNPSTGEAGQTN) are compositionally biased toward polar residues. Over residues 922–937 (DIHPGGDGPQVKKDVL) the composition is skewed to basic and acidic residues.

In terms of tissue distribution, strongly expressed in nervous tissue (at protein level).

Its subcellular location is the perikaryon. It is found in the cell projection. Its function is as follows. RNA-binding protein which is required for syntaxin location in sensory neurons during long-term synaptic facilitation. Binds to syntaxin mRNA and is required to maintain its accumulation at the axon hillock following neuronal stimulation and at the opposite pole in stable unstimulated sensory neurons. The protein is Double-stranded RNA-binding protein Staufen homolog of Aplysia californica (California sea hare).